Here is a 236-residue protein sequence, read N- to C-terminus: Pyridoxine 5'-phosphate synthase (236 aa).

Residue N6 participates in 3-amino-2-oxopropyl phosphate binding. Position 8-9 (D8–H9) interacts with 1-deoxy-D-xylulose 5-phosphate. Position 17 (R17) interacts with 3-amino-2-oxopropyl phosphate. H42 functions as the Proton acceptor in the catalytic mechanism. 1-deoxy-D-xylulose 5-phosphate is bound by residues R44 and H49. The Proton acceptor role is filled by E69. T99 is a binding site for 1-deoxy-D-xylulose 5-phosphate. Residue H190 is the Proton donor of the active site. 3-amino-2-oxopropyl phosphate-binding positions include G191 and G212–H213.

It belongs to the PNP synthase family. As to quaternary structure, homooctamer; tetramer of dimers.

The protein resides in the cytoplasm. It catalyses the reaction 3-amino-2-oxopropyl phosphate + 1-deoxy-D-xylulose 5-phosphate = pyridoxine 5'-phosphate + phosphate + 2 H2O + H(+). It participates in cofactor biosynthesis; pyridoxine 5'-phosphate biosynthesis; pyridoxine 5'-phosphate from D-erythrose 4-phosphate: step 5/5. Its function is as follows. Catalyzes the complicated ring closure reaction between the two acyclic compounds 1-deoxy-D-xylulose-5-phosphate (DXP) and 3-amino-2-oxopropyl phosphate (1-amino-acetone-3-phosphate or AAP) to form pyridoxine 5'-phosphate (PNP) and inorganic phosphate. In Chlorobium phaeobacteroides (strain DSM 266 / SMG 266 / 2430), this protein is Pyridoxine 5'-phosphate synthase.